Consider the following 171-residue polypeptide: MSHKKSGTYWATLITAFLKTVSKVEELDCVDSAVLVDVSKIITLTQEFRRHYDSVYRADYGPALKNWKRDLSKLFTSLFVDVINSGRIVGFFDVGRYVCEEVLCPGSWTEDHELLNDCMTHFFIENNLMNHFPLEDIFLAQRKFQTTGFTFLLHALAKVLPRIYSGNVIYV.

In terms of assembly, interacts with host BECN1; this interaction inhibits host autophagy. Interacts with host BAK1 and BAX.

The protein localises to the host cytoplasm. Plays a role in the protection against apoptosis mediated by cytotoxic cells during the immune response to acute and persistent viral infection. Contributes therefore to latency establishment. Plays also a role in the inhibition of host starvation-induced autophagy which ultimately contributes to the viral chronic infection. In Murid herpesvirus 4 (MuHV-4), this protein is Apoptosis regulator Bcl-2 homolog (vBCL2).